The primary structure comprises 334 residues: Glycerol-3-phosphate dehydrogenase [NAD(P)+] (334 aa).

Residues serine 14, tyrosine 15, histidine 35, and lysine 109 each contribute to the NADPH site. Residues lysine 109, glycine 138, and threonine 140 each contribute to the sn-glycerol 3-phosphate site. Alanine 142 serves as a coordination point for NADPH. The sn-glycerol 3-phosphate site is built by lysine 194, aspartate 247, serine 257, arginine 258, and asparagine 259. Lysine 194 acts as the Proton acceptor in catalysis. Arginine 258 serves as a coordination point for NADPH. Residues valine 282 and glutamate 284 each coordinate NADPH.

It belongs to the NAD-dependent glycerol-3-phosphate dehydrogenase family.

It is found in the cytoplasm. The catalysed reaction is sn-glycerol 3-phosphate + NAD(+) = dihydroxyacetone phosphate + NADH + H(+). It carries out the reaction sn-glycerol 3-phosphate + NADP(+) = dihydroxyacetone phosphate + NADPH + H(+). It functions in the pathway membrane lipid metabolism; glycerophospholipid metabolism. Its function is as follows. Catalyzes the reduction of the glycolytic intermediate dihydroxyacetone phosphate (DHAP) to sn-glycerol 3-phosphate (G3P), the key precursor for phospholipid synthesis. The protein is Glycerol-3-phosphate dehydrogenase [NAD(P)+] of Tolumonas auensis (strain DSM 9187 / NBRC 110442 / TA 4).